The sequence spans 908 residues: Transcriptional repressor ILP1 (908 aa).

Disordered regions lie at residues 1 to 113 and 238 to 277; these read MGSN…PQAG and VGPR…EEDK. Residues 25–47 are compositionally biased toward low complexity; that stretch reads ATPSSKPTSTLSSSKPKTLSASA. Positions 426-453 form a coiled coil; sequence MQNKGSLIEEIEDQMKELNEKHALSILE. Positions 513-530 are enriched in basic and acidic residues; it reads EFGRDENLQKRREVEQRA. The disordered stretch occupies residues 513–574; that stretch reads EFGRDENLQK…ESDTETSAYK (62 aa).

This sequence belongs to the GCF family. Interacts with STIPL1/NTR1.

Its subcellular location is the nucleus. Its function is as follows. Transcriptional repressor regulating endoreduplication through control of A-type cyclins expression. Does not bind to promoter sequences (in vitro) and may act by interacting with tissue-specific transcription factors. Enhances the endocycle in endoreduplicating cells in seedlings. Required for efficient splicing. The chain is Transcriptional repressor ILP1 from Arabidopsis thaliana (Mouse-ear cress).